Reading from the N-terminus, the 216-residue chain is 3-keto-L-gulonate-6-phosphate decarboxylase UlaD (216 aa).

Asp-11 provides a ligand contact to substrate. Mg(2+)-binding residues include Glu-33 and Asp-62. Residue Arg-192 participates in substrate binding.

This sequence belongs to the HPS/KGPDC family. KGPDC subfamily. In terms of assembly, homodimer. It depends on Mg(2+) as a cofactor.

It carries out the reaction 3-dehydro-L-gulonate 6-phosphate + H(+) = L-xylulose 5-phosphate + CO2. Its pathway is cofactor degradation; L-ascorbate degradation; D-xylulose 5-phosphate from L-ascorbate: step 2/4. Its function is as follows. Catalyzes the decarboxylation of 3-keto-L-gulonate-6-P into L-xylulose-5-P. Is involved in the anaerobic L-ascorbate utilization. The polypeptide is 3-keto-L-gulonate-6-phosphate decarboxylase UlaD (Shigella boydii serotype 18 (strain CDC 3083-94 / BS512)).